The sequence spans 104 residues: Large ribosomal subunit protein uL24 (104 aa).

Belongs to the universal ribosomal protein uL24 family. As to quaternary structure, part of the 50S ribosomal subunit.

Its function is as follows. One of two assembly initiator proteins, it binds directly to the 5'-end of the 23S rRNA, where it nucleates assembly of the 50S subunit. One of the proteins that surrounds the polypeptide exit tunnel on the outside of the subunit. The protein is Large ribosomal subunit protein uL24 of Idiomarina loihiensis (strain ATCC BAA-735 / DSM 15497 / L2-TR).